The following is a 170-amino-acid chain: Ribosome maturation factor RimM (170 aa).

The PRC barrel domain maps to 98-170 (PDEYYWVDLE…LIVVDWDPDF (73 aa)).

This sequence belongs to the RimM family. Binds ribosomal protein uS19.

The protein resides in the cytoplasm. Functionally, an accessory protein needed during the final step in the assembly of 30S ribosomal subunit, possibly for assembly of the head region. Essential for efficient processing of 16S rRNA. May be needed both before and after RbfA during the maturation of 16S rRNA. It has affinity for free ribosomal 30S subunits but not for 70S ribosomes. This chain is Ribosome maturation factor RimM, found in Xanthomonas axonopodis pv. citri (strain 306).